The primary structure comprises 302 residues: Sulfate adenylyltransferase subunit 2 (302 aa).

This sequence belongs to the PAPS reductase family. CysD subfamily. As to quaternary structure, heterodimer composed of CysD, the smaller subunit, and CysN.

It catalyses the reaction sulfate + ATP + H(+) = adenosine 5'-phosphosulfate + diphosphate. It functions in the pathway sulfur metabolism; hydrogen sulfide biosynthesis; sulfite from sulfate: step 1/3. Functionally, with CysN forms the ATP sulfurylase (ATPS) that catalyzes the adenylation of sulfate producing adenosine 5'-phosphosulfate (APS) and diphosphate, the first enzymatic step in sulfur assimilation pathway. APS synthesis involves the formation of a high-energy phosphoric-sulfuric acid anhydride bond driven by GTP hydrolysis by CysN coupled to ATP hydrolysis by CysD. This Klebsiella pneumoniae (strain 342) protein is Sulfate adenylyltransferase subunit 2.